Consider the following 509-residue polypeptide: Glycerol kinase (509 aa).

Threonine 12 serves as a coordination point for ADP. Residues threonine 12, threonine 13, and serine 14 each contribute to the ATP site. A sn-glycerol 3-phosphate-binding site is contributed by threonine 12. Arginine 16 contributes to the ADP binding site. 4 residues coordinate sn-glycerol 3-phosphate: arginine 82, glutamate 83, tyrosine 134, and aspartate 245. Glycerol contacts are provided by arginine 82, glutamate 83, tyrosine 134, aspartate 245, and glutamine 246. Positions 267 and 311 each coordinate ADP. Threonine 267, glycine 311, glutamine 315, and glycine 412 together coordinate ATP. The ADP site is built by glycine 412 and asparagine 416.

It belongs to the FGGY kinase family.

It carries out the reaction glycerol + ATP = sn-glycerol 3-phosphate + ADP + H(+). Its pathway is polyol metabolism; glycerol degradation via glycerol kinase pathway; sn-glycerol 3-phosphate from glycerol: step 1/1. Its activity is regulated as follows. Inhibited by fructose 1,6-bisphosphate (FBP). In terms of biological role, key enzyme in the regulation of glycerol uptake and metabolism. Catalyzes the phosphorylation of glycerol to yield sn-glycerol 3-phosphate. The sequence is that of Glycerol kinase from Rhizorhabdus wittichii (strain DSM 6014 / CCUG 31198 / JCM 15750 / NBRC 105917 / EY 4224 / RW1) (Sphingomonas wittichii).